Reading from the N-terminus, the 133-residue chain is Protransforming growth factor alpha (133 aa).

Positions 1-23 (MVPSAGQLALFALGIFLAVCQAL) are cleaved as a signal peptide. Residues 24 to 38 (ENSTSALSDPPVAAA) constitute a propeptide, removed in mature form. The Extracellular segment spans residues 24–97 (ENSTSALSDP…AVVAASQKKQ (74 aa)). Asn-25 carries an N-linked (GlcNAc...) asparagine glycan. The EGF-like domain occupies 42-82 (HFNDCPDSHTQFCFHGTCRFLLQEEKPACVCHSGYVGARCE). Cystine bridges form between Cys-46–Cys-59, Cys-54–Cys-70, and Cys-72–Cys-81. A propeptide spans 89-133 (VVAASQKKQAITALVVVTIVALAVLIITCVLIHCCEVRKHSVVVP) (removed in mature form). The chain crosses the membrane as a helical span at residues 98-120 (AITALVVVTIVALAVLIITCVLI). Topologically, residues 121-133 (HCCEVRKHSVVVP) are cytoplasmic.

As to quaternary structure, interacts with the PDZ domains of MAGI3, SDCBP and SNTA1. The interaction with SDCBP, is required for the targeting to the cell surface. In the endoplasmic reticulum, in its immature form (i.e. with a prosegment and lacking full N-glycosylation), interacts with CNIH. In the Golgi apparatus, may form a complex with CNIH and GORASP2. Interacts (via cytoplasmic C-terminal domain) with NKD2. In terms of tissue distribution, skin.

The protein resides in the secreted. It localises to the extracellular space. The protein localises to the cell membrane. In terms of biological role, TGF alpha is a mitogenic polypeptide that is able to bind to the EGF receptor/EGFR and to act synergistically with TGF beta to promote anchorage-independent cell proliferation in soft agar. The sequence is that of Protransforming growth factor alpha (TGFA) from Ovis aries (Sheep).